Reading from the N-terminus, the 186-residue chain is Elongation factor P (186 aa).

It belongs to the elongation factor P family.

The protein resides in the cytoplasm. The protein operates within protein biosynthesis; polypeptide chain elongation. Involved in peptide bond synthesis. Stimulates efficient translation and peptide-bond synthesis on native or reconstituted 70S ribosomes in vitro. Probably functions indirectly by altering the affinity of the ribosome for aminoacyl-tRNA, thus increasing their reactivity as acceptors for peptidyl transferase. This is Elongation factor P from Streptococcus thermophilus (strain CNRZ 1066).